Reading from the N-terminus, the 401-residue chain is G2/mitotic-specific cyclin-B1 (401 aa).

2 disordered regions span residues 1–30 and 84–103; these read MALR…PTLK and KVQV…ETSG. Residues 9–26 are compositionally biased toward polar residues; that stretch reads RLASTRAEQGGKTCSVSG.

This sequence belongs to the cyclin family. Cyclin AB subfamily. As to quaternary structure, interacts with the CDK1 protein kinase to form a serine/threonine kinase holoenzyme complex also known as maturation promoting factor (MPF). The cyclin subunit imparts substrate specificity to the complex.

Essential for the control of the cell cycle at the G2/M (mitosis) transition. The chain is G2/mitotic-specific cyclin-B1 (ccnb1) from Oryzias javanicus (Javanese ricefish).